Consider the following 858-residue polypeptide: MENELPVPHTSSSACATSSTSGASSSSGCNNSSSGGSGRPTGPQISVYSGIPDRQTVQVIQQALHRQPSTAAQYLQQMYAAQQQHLMLQTAALQQQHLSSAQLQSLAAVQQASLVSNRQGSTSGSNVSAQAPAQSSSINLAASPAAAQLLNRAQSVNSAAASGIAQQAVLLGNTSSPALTASQAQMYLRAQMLIFTPTATVATVQPELGTGSPARPPTPAQVQNLTLRTQQTPAAAASGPTPTQPVLPSLALKPTPGGSQPLPTPAQSRNTAQASPAGAKPGIADSVMEPHKKGDGNSSVPGSMEGRAGLSRTVPAVAAHPLIAPAYAQLQPHQLLPQPSSKHLQPQFVIQQQPQPQQQQPPPQQSRPVLQAEPHPQLASVSPSVALQPSSEAHAMPLGPVTPALPLQCPTANLHKPGGSQQCHPPTPDTGPQNGHPEGVPHTPQRRFQHTSAVILQLQPASPPQQCVPDDWKEVAPGEKSVPETRSGPSPHQQAIVTAMPGGLPVPTSPNIQPSPAHETGQGIVHALTDLSSPGMTSGNGNSASSIAGTAPQNGENKPPQAIVKPQILTHVIEGFVIQEGAEPFPVGRSSLLVGNLKKKYAQGFLPEKLPQQDHTTTTDSEMEEPYLQESKEEGAPLKLKCELCGRVDFAYKFKRSKRFCSMACAKRYNVGCTKRVGLFHSDRSKLQKAGAATHNRRRASKASLPPLTKDTKKQPTGTVPLSVTAALQLTHSQEDSSRCSDNSSYEEPLSPISASSSTSRRRQGQRDLELPDMHMRDLVGMGHHFLPSEPTKWNVEDVYEFIRSLPGCQEIAEEFRAQEIDGQALLLLKEDHLMSAMNIKLGPALKIYARISMLKDS.

6 disordered regions span residues 1-76 (MENE…QYLQ), 230-307 (QQTP…MEGR), 337-388 (PQPS…VALQ), 407-444 (LQCP…PHTP), 473-493 (KEVA…SPHQ), and 529-561 (TDLS…KPPQ). 2 stretches are compositionally biased toward low complexity: residues 10-34 (TSSS…NSSS) and 230-241 (QQTPAAAASGPT). Residues 33–53 (SSGGSGRPTGPQISVYSGIPD) form an interaction with BMI1 region. Over residues 265–274 (PAQSRNTAQA) the composition is skewed to polar residues. Residues 337-358 (PQPSSKHLQPQFVIQQQPQPQQ) are compositionally biased toward low complexity. Polar residues predominate over residues 379-388 (ASVSPSVALQ). Basic and acidic residues predominate over residues 473–483 (KEVAPGEKSVP). The segment covering 537-551 (TSGNGNSASSIAGTA) has biased composition (low complexity). Positions 558 to 587 (KPPQAIVKPQILTHVIEGFVIQEGAEPFPV) match the HD1 motif. Glycyl lysine isopeptide (Lys-Gly) (interchain with G-Cter in SUMO2) cross-links involve residues Lys-598 and Lys-600. Thr-619 carries the phosphothreonine modification. Ser-621 bears the Phosphoserine mark. Residue Lys-632 forms a Glycyl lysine isopeptide (Lys-Gly) (interchain with G-Cter in SUMO2) linkage. The segment at 633–667 (EEGAPLKLKCELCGRVDFAYKFKRSKRFCSMACAK) adopts an FCS-type zinc-finger fold. 4 residues coordinate Zn(2+): Cys-642, Cys-645, Cys-661, and Cys-665. 2 disordered regions span residues 688 to 720 (QKAG…TGTV) and 732 to 768 (HSQE…GQRD). Residue Lys-702 forms a Glycyl lysine isopeptide (Lys-Gly) (interchain with G-Cter in SUMO2) linkage. Position 751 is a phosphoserine (Ser-751). The SAM domain occupies 794 to 858 (WNVEDVYEFI…YARISMLKDS (65 aa)). A Glycyl lysine isopeptide (Lys-Gly) (interchain with G-Cter in SUMO2) cross-link involves residue Lys-847.

As to quaternary structure, component of a PRC1-like complex. Interacts with CBX4. Interacts with BMI1, PCGF2, PHC1 and RNF2. Interacts with CHTOP. Interacts with the N-terminal region of the SP1 transcription factor and with MAPKAPK2. Interacts with SAMD7 and SAMD11.

Its subcellular location is the nucleus. Component of a Polycomb group (PcG) multiprotein PRC1-like complex, a complex class required to maintain the transcriptionally repressive state of many genes, including Hox genes, throughout development. PcG PRC1 complex acts via chromatin remodeling and modification of histones; it mediates monoubiquitination of histone H2A 'Lys-119', rendering chromatin heritably changed in its expressibility. The sequence is that of Polyhomeotic-like protein 2 (PHC2) from Homo sapiens (Human).